The primary structure comprises 449 residues: Neuraminidase (449 aa).

Over 1–6 (MNPNQK) the chain is Intravirion. A helical membrane pass occupies residues 7 to 27 (IITIGSICMVIGIVSLMLQIG). The tract at residues 11–33 (GSICMVIGIVSLMLQIGNMISIW) is involved in apical transport and lipid raft association. Over 28–449 (NMISIWVSHS…GAELPFTIDK (422 aa)) the chain is Virion surface. The interval 36–70 (HSIQTGNQHQAEPISNTNFLTEKAVASVTLAGNSS) is hypervariable stalk region. A glycan (N-linked (GlcNAc...) asparagine; by host) is linked at Asn-68. The tract at residues 71 to 449 (LCPISGWAVH…GAELPFTIDK (379 aa)) is head of neuraminidase. Cystine bridges form between Cys-72/Cys-397, Cys-104/Cys-109, Cys-164/Cys-211, Cys-213/Cys-218, Cys-259/Cys-272, Cys-261/Cys-270, Cys-298/Cys-315, and Cys-401/Cys-426. Arg-98 contributes to the substrate binding site. Residue Asn-126 is glycosylated (N-linked (GlcNAc...) asparagine; by host). Asp-131 serves as the catalytic Proton donor/acceptor. Position 132 (Arg-132) interacts with substrate. Asn-215 carries an N-linked (GlcNAc...) asparagine; by host glycan. 257–258 (EE) serves as a coordination point for substrate. Substrate is bound at residue Arg-273. Ca(2+) contacts are provided by Asp-274, Gly-278, and Asp-304. A substrate-binding site is contributed by Arg-348. The active-site Nucleophile is Tyr-382.

The protein belongs to the glycosyl hydrolase 34 family. In terms of assembly, homotetramer. The cofactor is Ca(2+). Post-translationally, N-glycosylated.

It localises to the virion membrane. The protein resides in the host apical cell membrane. It catalyses the reaction Hydrolysis of alpha-(2-&gt;3)-, alpha-(2-&gt;6)-, alpha-(2-&gt;8)- glycosidic linkages of terminal sialic acid residues in oligosaccharides, glycoproteins, glycolipids, colominic acid and synthetic substrates.. Its activity is regulated as follows. Inhibited by the neuraminidase inhibitors zanamivir (Relenza) and oseltamivir (Tamiflu). These drugs interfere with the release of progeny virus from infected cells and are effective against all influenza strains. Resistance to neuraminidase inhibitors is quite rare. In terms of biological role, catalyzes the removal of terminal sialic acid residues from viral and cellular glycoconjugates. Cleaves off the terminal sialic acids on the glycosylated HA during virus budding to facilitate virus release. Additionally helps virus spread through the circulation by further removing sialic acids from the cell surface. These cleavages prevent self-aggregation and ensure the efficient spread of the progeny virus from cell to cell. Otherwise, infection would be limited to one round of replication. Described as a receptor-destroying enzyme because it cleaves a terminal sialic acid from the cellular receptors. May facilitate viral invasion of the upper airways by cleaving the sialic acid moieties on the mucin of the airway epithelial cells. Likely to plays a role in the budding process through its association with lipid rafts during intracellular transport. May additionally display a raft-association independent effect on budding. Plays a role in the determination of host range restriction on replication and virulence. Sialidase activity in late endosome/lysosome traffic seems to enhance virus replication. This is Neuraminidase from Influenza A virus (strain A/Chicken/Hong Kong/96.1/2002 H5N1 genotype Y).